A 126-amino-acid polypeptide reads, in one-letter code: Large ribosomal subunit protein eL28 (126 aa).

N-acetylserine is present on S2.

The protein belongs to the eukaryotic ribosomal protein eL28 family.

This Caenorhabditis elegans protein is Large ribosomal subunit protein eL28 (rpl-28).